The following is a 259-amino-acid chain: 5'-nucleotidase SurE (259 aa).

Residues aspartate 8, aspartate 9, serine 40, and asparagine 92 each contribute to the a divalent metal cation site.

This sequence belongs to the SurE nucleotidase family. A divalent metal cation serves as cofactor.

It localises to the cytoplasm. It catalyses the reaction a ribonucleoside 5'-phosphate + H2O = a ribonucleoside + phosphate. Nucleotidase that shows phosphatase activity on nucleoside 5'-monophosphates. The protein is 5'-nucleotidase SurE of Xanthomonas campestris pv. campestris (strain B100).